The primary structure comprises 220 residues: Adenylate kinase (220 aa).

G12–T17 contacts ATP. The tract at residues S32–V62 is NMP. AMP contacts are provided by residues T33, R38, E60–V62, G88–R91, and Q95. Residues S129–D166 are LID. Residue R130 coordinates ATP. The Zn(2+) site is built by C133 and C136. I139–Y140 contacts ATP. The Zn(2+) site is built by C153 and C156. Residues R163 and R174 each contribute to the AMP site. I202 provides a ligand contact to ATP.

This sequence belongs to the adenylate kinase family. Monomer.

Its subcellular location is the cytoplasm. The enzyme catalyses AMP + ATP = 2 ADP. Its pathway is purine metabolism; AMP biosynthesis via salvage pathway; AMP from ADP: step 1/1. Functionally, catalyzes the reversible transfer of the terminal phosphate group between ATP and AMP. Plays an important role in cellular energy homeostasis and in adenine nucleotide metabolism. This Thermotoga neapolitana protein is Adenylate kinase.